Consider the following 320-residue polypeptide: Pantothenate kinase (320 aa).

ATP is bound at residue 96 to 103; that stretch reads GSVAVGKS.

This sequence belongs to the prokaryotic pantothenate kinase family.

The protein localises to the cytoplasm. It carries out the reaction (R)-pantothenate + ATP = (R)-4'-phosphopantothenate + ADP + H(+). It participates in cofactor biosynthesis; coenzyme A biosynthesis; CoA from (R)-pantothenate: step 1/5. The sequence is that of Pantothenate kinase from Brevibacillus brevis (strain 47 / JCM 6285 / NBRC 100599).